The chain runs to 395 residues: Phosphopentomutase (395 aa).

Residues Asp-14, Asp-289, His-294, Asp-330, His-331, and His-342 each contribute to the Mn(2+) site.

Belongs to the phosphopentomutase family. Mn(2+) serves as cofactor.

It is found in the cytoplasm. The enzyme catalyses 2-deoxy-alpha-D-ribose 1-phosphate = 2-deoxy-D-ribose 5-phosphate. It carries out the reaction alpha-D-ribose 1-phosphate = D-ribose 5-phosphate. The protein operates within carbohydrate degradation; 2-deoxy-D-ribose 1-phosphate degradation; D-glyceraldehyde 3-phosphate and acetaldehyde from 2-deoxy-alpha-D-ribose 1-phosphate: step 1/2. Isomerase that catalyzes the conversion of deoxy-ribose 1-phosphate (dRib-1-P) and ribose 1-phosphate (Rib-1-P) to deoxy-ribose 5-phosphate (dRib-5-P) and ribose 5-phosphate (Rib-5-P), respectively. The chain is Phosphopentomutase from Mycoplasmopsis pulmonis (strain UAB CTIP) (Mycoplasma pulmonis).